The sequence spans 329 residues: Beta-ketoacyl-[acyl-carrier-protein] synthase III (329 aa).

Active-site residues include Cys123 and His256. Positions 257 to 261 (QANVR) are ACP-binding. Asn286 is a catalytic residue.

Belongs to the thiolase-like superfamily. FabH family. In terms of assembly, homodimer.

The protein localises to the cytoplasm. The catalysed reaction is malonyl-[ACP] + acetyl-CoA + H(+) = 3-oxobutanoyl-[ACP] + CO2 + CoA. It functions in the pathway lipid metabolism; fatty acid biosynthesis. Catalyzes the condensation reaction of fatty acid synthesis by the addition to an acyl acceptor of two carbons from malonyl-ACP. Catalyzes the first condensation reaction which initiates fatty acid synthesis and may therefore play a role in governing the total rate of fatty acid production. Possesses both acetoacetyl-ACP synthase and acetyl transacylase activities. Its substrate specificity determines the biosynthesis of branched-chain and/or straight-chain of fatty acids. The polypeptide is Beta-ketoacyl-[acyl-carrier-protein] synthase III (Bordetella parapertussis (strain 12822 / ATCC BAA-587 / NCTC 13253)).